Consider the following 463-residue polypeptide: ATP-dependent protease ATPase subunit HslU (463 aa).

ATP-binding positions include isoleucine 19 and 61-66 (GVGKTE). Residues 154–174 (FGGAQNSSQTSDTQEDGEIEK) are disordered. 3 residues coordinate ATP: aspartate 277, glutamate 341, and arginine 413.

The protein belongs to the ClpX chaperone family. HslU subfamily. In terms of assembly, a double ring-shaped homohexamer of HslV is capped on each side by a ring-shaped HslU homohexamer. The assembly of the HslU/HslV complex is dependent on binding of ATP.

It localises to the cytoplasm. ATPase subunit of a proteasome-like degradation complex; this subunit has chaperone activity. The binding of ATP and its subsequent hydrolysis by HslU are essential for unfolding of protein substrates subsequently hydrolyzed by HslV. HslU recognizes the N-terminal part of its protein substrates and unfolds these before they are guided to HslV for hydrolysis. In Bacillus cereus (strain G9842), this protein is ATP-dependent protease ATPase subunit HslU.